Here is a 23-residue protein sequence, read N- to C-terminus: Acidic phospholipase A2 Ts-A5 (23 aa).

The cofactor is Ca(2+). Post-translationally, contains 7 disulfide bonds. In terms of tissue distribution, expressed by the venom gland.

The protein localises to the secreted. The catalysed reaction is a 1,2-diacyl-sn-glycero-3-phosphocholine + H2O = a 1-acyl-sn-glycero-3-phosphocholine + a fatty acid + H(+). Functionally, snake venom phospholipase A2 (PLA2) that shows a moderate inhibition of ADP-induced human platelet aggregation when tested on platelet rich plasma. Exhibits high hydrolytic activities and prefers the anionic micelles (dPPC with deoxycholate) to the zwitterionic micelles (dPPC with Triton X-100). PLA2 catalyzes the calcium-dependent hydrolysis of the 2-acyl groups in 3-sn-phosphoglycerides. This Trimeresurus stejnegeri (Chinese green tree viper) protein is Acidic phospholipase A2 Ts-A5.